The chain runs to 266 residues: Cyclin-C (266 aa).

Positions Ile47–Ile151 constitute a Cyclin N-terminal domain.

The protein belongs to the cyclin family. Cyclin C subfamily. As to quaternary structure, component of the Cdk8 module of the Mediator complex.

The protein localises to the nucleus. Functionally, component of the Mediator complex, a coactivator involved in regulated gene transcription of nearly all RNA polymerase II-dependent genes. Mediator functions as a bridge to convey information from gene-specific regulatory proteins to the basal RNA polymerase II transcription machinery. Mediator is recruited to promoters by direct interactions with regulatory proteins and serves as a scaffold for the assembly of a functional preinitiation complex with RNA polymerase II and the general transcription factors. Binds to and activates cyclin-dependent kinase Cdk8 that phosphorylates the CTD (C-terminal domain) of the large subunit of RNA polymerase II (RNAp II), which may inhibit the formation of a transcription initiation complex. This is Cyclin-C (CycC) from Anopheles gambiae (African malaria mosquito).